The chain runs to 243 residues: Pyridoxine 5'-phosphate synthase (243 aa).

Asparagine 9 contacts 3-amino-2-oxopropyl phosphate. Position 11–12 (11–12 (DH)) interacts with 1-deoxy-D-xylulose 5-phosphate. Arginine 20 provides a ligand contact to 3-amino-2-oxopropyl phosphate. The active-site Proton acceptor is histidine 45. 1-deoxy-D-xylulose 5-phosphate-binding residues include arginine 47 and histidine 52. Glutamate 72 serves as the catalytic Proton acceptor. Threonine 102 is a 1-deoxy-D-xylulose 5-phosphate binding site. Histidine 193 functions as the Proton donor in the catalytic mechanism. 3-amino-2-oxopropyl phosphate is bound by residues glycine 194 and 215-216 (GH).

Belongs to the PNP synthase family. As to quaternary structure, homooctamer; tetramer of dimers.

Its subcellular location is the cytoplasm. It carries out the reaction 3-amino-2-oxopropyl phosphate + 1-deoxy-D-xylulose 5-phosphate = pyridoxine 5'-phosphate + phosphate + 2 H2O + H(+). Its pathway is cofactor biosynthesis; pyridoxine 5'-phosphate biosynthesis; pyridoxine 5'-phosphate from D-erythrose 4-phosphate: step 5/5. Its function is as follows. Catalyzes the complicated ring closure reaction between the two acyclic compounds 1-deoxy-D-xylulose-5-phosphate (DXP) and 3-amino-2-oxopropyl phosphate (1-amino-acetone-3-phosphate or AAP) to form pyridoxine 5'-phosphate (PNP) and inorganic phosphate. In Vibrio cholerae serotype O1 (strain ATCC 39315 / El Tor Inaba N16961), this protein is Pyridoxine 5'-phosphate synthase.